The primary structure comprises 268 residues: Nickel import ATP-binding protein NikE (268 aa).

One can recognise an ABC transporter domain in the interval 4–252; sequence LNVSGLSHHY…SSDAGRVLQN (249 aa). Position 45 to 52 (45 to 52) interacts with ATP; it reads GRSGCGKS.

This sequence belongs to the ABC transporter superfamily. Nickel importer (TC 3.A.1.5.3) family. As to quaternary structure, the complex is composed of two ATP-binding proteins (NikD and NikE), two transmembrane proteins (NikB and NikC) and a solute-binding protein (NikA).

The protein localises to the cell inner membrane. The catalysed reaction is Ni(2+)(out) + ATP + H2O = Ni(2+)(in) + ADP + phosphate + H(+). Functionally, part of the ABC transporter complex NikABCDE involved in nickel import. Responsible for energy coupling to the transport system. In Shigella boydii serotype 4 (strain Sb227), this protein is Nickel import ATP-binding protein NikE.